A 92-amino-acid polypeptide reads, in one-letter code: Large ribosomal subunit protein bL25 (92 aa).

Belongs to the bacterial ribosomal protein bL25 family. In terms of assembly, part of the 50S ribosomal subunit; part of the 5S rRNA/L5/L18/L25 subcomplex. Contacts the 5S rRNA. Binds to the 5S rRNA independently of L5 and L18.

Its function is as follows. This is one of the proteins that binds to the 5S RNA in the ribosome where it forms part of the central protuberance. This is Large ribosomal subunit protein bL25 from Vibrio vulnificus (strain CMCP6).